The sequence spans 445 residues: Potassium/proton antiporter CemA (445 aa).

A run of 4 helical transmembrane segments spans residues 44–64 (MQVSVVTFLTLVLVPLGVNIC), 330–350 (ALTCITITFLFFGLKVQILIL), 368–388 (LIIIIVTDLLVGYHSPQGWKL), and 405–425 (FILCFIGTFPVILDTIFKYWI).

Belongs to the CemA family.

It is found in the plastid. Its subcellular location is the chloroplast inner membrane. The catalysed reaction is K(+)(in) + H(+)(out) = K(+)(out) + H(+)(in). Functionally, contributes to K(+)/H(+) antiport activity by supporting proton efflux to control proton extrusion and homeostasis in chloroplasts in a light-dependent manner to modulate photosynthesis. Prevents excessive induction of non-photochemical quenching (NPQ) under continuous-light conditions. Indirectly promotes efficient inorganic carbon uptake into chloroplasts. This Pleurastrum terricola (Filamentous green alga) protein is Potassium/proton antiporter CemA.